A 156-amino-acid chain; its full sequence is SsrA-binding protein (156 aa).

This sequence belongs to the SmpB family.

It localises to the cytoplasm. Its function is as follows. Required for rescue of stalled ribosomes mediated by trans-translation. Binds to transfer-messenger RNA (tmRNA), required for stable association of tmRNA with ribosomes. tmRNA and SmpB together mimic tRNA shape, replacing the anticodon stem-loop with SmpB. tmRNA is encoded by the ssrA gene; the 2 termini fold to resemble tRNA(Ala) and it encodes a 'tag peptide', a short internal open reading frame. During trans-translation Ala-aminoacylated tmRNA acts like a tRNA, entering the A-site of stalled ribosomes, displacing the stalled mRNA. The ribosome then switches to translate the ORF on the tmRNA; the nascent peptide is terminated with the 'tag peptide' encoded by the tmRNA and targeted for degradation. The ribosome is freed to recommence translation, which seems to be the essential function of trans-translation. In Clostridium tetani (strain Massachusetts / E88), this protein is SsrA-binding protein.